The chain runs to 291 residues: ATP synthase gamma chain (291 aa).

The protein belongs to the ATPase gamma chain family. As to quaternary structure, F-type ATPases have 2 components, CF(1) - the catalytic core - and CF(0) - the membrane proton channel. CF(1) has five subunits: alpha(3), beta(3), gamma(1), delta(1), epsilon(1). CF(0) has three main subunits: a, b and c.

It localises to the cell inner membrane. Produces ATP from ADP in the presence of a proton gradient across the membrane. The gamma chain is believed to be important in regulating ATPase activity and the flow of protons through the CF(0) complex. This is ATP synthase gamma chain from Nitratidesulfovibrio vulgaris (strain ATCC 29579 / DSM 644 / CCUG 34227 / NCIMB 8303 / VKM B-1760 / Hildenborough) (Desulfovibrio vulgaris).